A 67-amino-acid polypeptide reads, in one-letter code: Islet amyloid polypeptide (67 aa).

The first 22 residues, 1-22 (MCILKLPIVLLVLSVAVNHLQA), serve as a signal peptide directing secretion. The propeptide occupies 23-31 (SPVESHQVE). A disulfide bond links Cys35 and Cys40.

The protein belongs to the calcitonin family. As to quaternary structure, can form homodimers. Interacts with IDE and INS. Interaction with INS inhibits homodimerization and fibril formation.

It is found in the secreted. Functionally, amylin/IAPP is a glucoregulatory peptide hormone that plays an important role in the regulation of energy homeostasis. Selectively inhibits insulin-stimulated glucose utilization and glycogen deposition in muscle, while not affecting adipocyte glucose metabolism. IAPP function is mediated by the CALCR-RAMPs (AMYRs) receptor complexes. Amylin can also bind CALCR receptor in the absence of RAMPs, although it is more selective for AMYRs. This Oryctolagus cuniculus (Rabbit) protein is Islet amyloid polypeptide (IAPP).